Consider the following 443-residue polypeptide: Putative type II methyltransferase M.BsuMIIP (443 aa).

The SAM-dependent MTase C5-type domain maps to 4–440; the sequence is LRVMSLFSGI…QELIHTYVNK (437 aa). Residue C78 is part of the active site.

The protein belongs to the class I-like SAM-binding methyltransferase superfamily. C5-methyltransferase family.

The catalysed reaction is a 2'-deoxycytidine in DNA + S-adenosyl-L-methionine = a 5-methyl-2'-deoxycytidine in DNA + S-adenosyl-L-homocysteine + H(+). Its function is as follows. A putative methylase, recognizes the double-stranded sequence 5'-GGCC-3', methylates C-?. There is no known cognate restriction enzyme. In Bacillus subtilis (strain 168), this protein is Putative type II methyltransferase M.BsuMIIP (mtbP).